The sequence spans 92 residues: Costars family protein ST45-2 (92 aa).

Met1 carries the post-translational modification N-acetylmethionine.

It belongs to the costars family.

In Eutrema halophilum (Salt cress), this protein is Costars family protein ST45-2.